Consider the following 201-residue polypeptide: Large ribosomal subunit protein uL4 (201 aa).

The tract at residues 43–71 (TRAQKTRSEVSGGGKKPWAQKGTGRARAG) is disordered.

Belongs to the universal ribosomal protein uL4 family. In terms of assembly, part of the 50S ribosomal subunit.

One of the primary rRNA binding proteins, this protein initially binds near the 5'-end of the 23S rRNA. It is important during the early stages of 50S assembly. It makes multiple contacts with different domains of the 23S rRNA in the assembled 50S subunit and ribosome. In terms of biological role, forms part of the polypeptide exit tunnel. The chain is Large ribosomal subunit protein uL4 from Pseudoalteromonas translucida (strain TAC 125).